A 192-amino-acid chain; its full sequence is MYQDLIRNELNEAAETLANFLKDDANIHAIQRAAVLLADSFKGGGKVLSCGNGGSHCDAMHFAEELTGRYRENRPGYPAIAISDVSHISCVGNDFGFNDIFSRYVEAVGREGDVLLGISTSGNSANVIKAIAAAREKGMKVITLTGKDGGKMAGTADIEIRVPHFGYADRIQEIHIKVIHILIQLIEKEMVK.

The 156-residue stretch at 37–192 (LADSFKGGGK…IQLIEKEMVK (156 aa)) folds into the SIS domain. Substrate is bound at residue 52 to 54 (NGG). Zn(2+) contacts are provided by His-61 and Glu-65. Substrate-binding positions include Glu-65, 93 to 94 (ND), 119 to 121 (STS), Ser-124, and Gln-172. Zn(2+) contacts are provided by Gln-172 and His-180.

This sequence belongs to the SIS family. GmhA subfamily. As to quaternary structure, homotetramer. Zn(2+) is required as a cofactor.

The protein localises to the cytoplasm. It catalyses the reaction 2 D-sedoheptulose 7-phosphate = D-glycero-alpha-D-manno-heptose 7-phosphate + D-glycero-beta-D-manno-heptose 7-phosphate. It participates in carbohydrate biosynthesis; D-glycero-D-manno-heptose 7-phosphate biosynthesis; D-glycero-alpha-D-manno-heptose 7-phosphate and D-glycero-beta-D-manno-heptose 7-phosphate from sedoheptulose 7-phosphate: step 1/1. In terms of biological role, catalyzes the isomerization of sedoheptulose 7-phosphate in D-glycero-D-manno-heptose 7-phosphate. This chain is Phosphoheptose isomerase, found in Escherichia coli O7:K1 (strain IAI39 / ExPEC).